The chain runs to 214 residues: Probable nicotinate-nucleotide adenylyltransferase (214 aa).

It belongs to the NadD family.

The catalysed reaction is nicotinate beta-D-ribonucleotide + ATP + H(+) = deamido-NAD(+) + diphosphate. It functions in the pathway cofactor biosynthesis; NAD(+) biosynthesis; deamido-NAD(+) from nicotinate D-ribonucleotide: step 1/1. Functionally, catalyzes the reversible adenylation of nicotinate mononucleotide (NaMN) to nicotinic acid adenine dinucleotide (NaAD). This Pseudomonas paraeruginosa (strain DSM 24068 / PA7) (Pseudomonas aeruginosa (strain PA7)) protein is Probable nicotinate-nucleotide adenylyltransferase.